The sequence spans 361 residues: DNA replication and repair protein RecF (361 aa).

30–37 contacts ATP; sequence GDNAQGKT.

The protein belongs to the RecF family.

The protein resides in the cytoplasm. Its function is as follows. The RecF protein is involved in DNA metabolism; it is required for DNA replication and normal SOS inducibility. RecF binds preferentially to single-stranded, linear DNA. It also seems to bind ATP. The polypeptide is DNA replication and repair protein RecF (Clostridium botulinum (strain Alaska E43 / Type E3)).